A 327-amino-acid chain; its full sequence is Malate dehydrogenase (327 aa).

An NAD(+)-binding site is contributed by 11–17 (GAAGQIS). Substrate is bound by residues Arg92 and Arg98. NAD(+) contacts are provided by residues Asn105, Gln112, and 129–131 (VGN). Residues Asn131 and Arg162 each coordinate substrate. His187 acts as the Proton acceptor in catalysis.

It belongs to the LDH/MDH superfamily. MDH type 2 family.

It catalyses the reaction (S)-malate + NAD(+) = oxaloacetate + NADH + H(+). Catalyzes the reversible oxidation of malate to oxaloacetate. The sequence is that of Malate dehydrogenase from Teredinibacter turnerae (strain ATCC 39867 / T7901).